The chain runs to 432 residues: Glutamyl-tRNA reductase (432 aa).

Substrate is bound by residues 49-52 (TCNR), Ser101, 106-108 (EPQ), and Gln112. Cys50 (nucleophile) is an active-site residue. Position 181–186 (181–186 (GAGETI)) interacts with NADP(+). The disordered stretch occupies residues 408–432 (PEKPGYRHPPVATPIVRTDDANPAP).

The protein belongs to the glutamyl-tRNA reductase family. In terms of assembly, homodimer.

It carries out the reaction (S)-4-amino-5-oxopentanoate + tRNA(Glu) + NADP(+) = L-glutamyl-tRNA(Glu) + NADPH + H(+). The protein operates within porphyrin-containing compound metabolism; protoporphyrin-IX biosynthesis; 5-aminolevulinate from L-glutamyl-tRNA(Glu): step 1/2. In terms of biological role, catalyzes the NADPH-dependent reduction of glutamyl-tRNA(Glu) to glutamate 1-semialdehyde (GSA). In Xanthomonas campestris pv. campestris (strain B100), this protein is Glutamyl-tRNA reductase.